The following is a 65-amino-acid chain: uncharacterized protein (65 aa).

It is found in the plastid. The protein resides in the chloroplast. This is an uncharacterized protein from Mesostigma viride (Green alga).